A 35-amino-acid chain; its full sequence is 3-hydroxyisobutyrate dehydrogenase (35 aa).

Position 4–33 (4–33 (TPVGFIGLGNMGNPMAKNLMKHGYPLIIYD)) interacts with NAD(+). Lys-24 is modified (N6-acetyllysine; alternate). Lys-24 is modified (N6-succinyllysine; alternate).

This sequence belongs to the HIBADH-related family. 3-hydroxyisobutyrate dehydrogenase subfamily. Homodimer.

The protein localises to the mitochondrion. The catalysed reaction is 3-hydroxy-2-methylpropanoate + NAD(+) = 2-methyl-3-oxopropanoate + NADH + H(+). It participates in amino-acid degradation; L-valine degradation. The polypeptide is 3-hydroxyisobutyrate dehydrogenase (HIBADH) (Oryctolagus cuniculus (Rabbit)).